The chain runs to 71 residues: Cold shock-like protein CspB (71 aa).

The 61-residue stretch at 7 to 67 folds into the CSD domain; the sequence is GLVKWFNADK…GAKGPAAANV (61 aa).

Its subcellular location is the cytoplasm. In Escherichia coli (strain K12), this protein is Cold shock-like protein CspB (cspB).